A 378-amino-acid polypeptide reads, in one-letter code: Erythronate-4-phosphate dehydrogenase (378 aa).

Substrate is bound by residues S45 and T66. Residues D146 and T175 each coordinate NAD(+). R208 is an active-site residue. D232 is a binding site for NAD(+). E237 is a catalytic residue. The active-site Proton donor is the H254. Residue G257 participates in NAD(+) binding. Residue Y258 coordinates substrate.

It belongs to the D-isomer specific 2-hydroxyacid dehydrogenase family. PdxB subfamily. Homodimer.

It is found in the cytoplasm. The catalysed reaction is 4-phospho-D-erythronate + NAD(+) = (R)-3-hydroxy-2-oxo-4-phosphooxybutanoate + NADH + H(+). It functions in the pathway cofactor biosynthesis; pyridoxine 5'-phosphate biosynthesis; pyridoxine 5'-phosphate from D-erythrose 4-phosphate: step 2/5. Catalyzes the oxidation of erythronate-4-phosphate to 3-hydroxy-2-oxo-4-phosphonooxybutanoate. The chain is Erythronate-4-phosphate dehydrogenase from Salmonella arizonae (strain ATCC BAA-731 / CDC346-86 / RSK2980).